The following is a 187-amino-acid chain: Probable GTP-binding protein EngB (187 aa).

The region spanning 18-187 (KNSEIAFWGR…KLKENINSNF (170 aa)) is the EngB-type G domain. Residues 26–33 (GRSNVGKS), 52–56 (GRTQL), 70–73 (DLPG), 137–140 (TKID), and 168–170 (VSS) each bind GTP. Positions 33 and 54 each coordinate Mg(2+).

It belongs to the TRAFAC class TrmE-Era-EngA-EngB-Septin-like GTPase superfamily. EngB GTPase family. Requires Mg(2+) as cofactor.

In terms of biological role, necessary for normal cell division and for the maintenance of normal septation. This Mycoplasmopsis synoviae (strain 53) (Mycoplasma synoviae) protein is Probable GTP-binding protein EngB.